Consider the following 171-residue polypeptide: MTATANTFILGAGVEWGTTFVTLVTFVILIILLKKFAWGPLKEVMDKRERDINKDIDDAEQAKINAQKLEEENRKTLKETQDEVQKILDDAKIQARKQHEEIIHEANEKANGMIETAQSEINSQKERAISDINNQVSELSVLIASKVLRKEISEQDQKELVEKYLKEAGDK.

A helical transmembrane segment spans residues 13-33 (GVEWGTTFVTLVTFVILIILL).

Belongs to the ATPase B chain family. F-type ATPases have 2 components, F(1) - the catalytic core - and F(0) - the membrane proton channel. F(1) has five subunits: alpha(3), beta(3), gamma(1), delta(1), epsilon(1). F(0) has three main subunits: a(1), b(2) and c(10-14). The alpha and beta chains form an alternating ring which encloses part of the gamma chain. F(1) is attached to F(0) by a central stalk formed by the gamma and epsilon chains, while a peripheral stalk is formed by the delta and b chains.

The protein resides in the cell membrane. In terms of biological role, f(1)F(0) ATP synthase produces ATP from ADP in the presence of a proton or sodium gradient. F-type ATPases consist of two structural domains, F(1) containing the extramembraneous catalytic core and F(0) containing the membrane proton channel, linked together by a central stalk and a peripheral stalk. During catalysis, ATP synthesis in the catalytic domain of F(1) is coupled via a rotary mechanism of the central stalk subunits to proton translocation. Component of the F(0) channel, it forms part of the peripheral stalk, linking F(1) to F(0). The sequence is that of ATP synthase subunit b from Staphylococcus epidermidis (strain ATCC 12228 / FDA PCI 1200).